Here is a 353-residue protein sequence, read N- to C-terminus: Probable arabinan endo-1,5-alpha-L-arabinosidase B (353 aa).

A signal peptide spans 1-16 (MVLVATLFSLFTVSLC). The active-site Proton acceptor is the Asp39. Asn194 carries an N-linked (GlcNAc...) asparagine glycan. Residues 202–227 (HLAKHPKTERVNSQDQNPDPLCRDSS) form a disordered region. Catalysis depends on Glu233, which acts as the Proton donor.

Belongs to the glycosyl hydrolase 43 family.

The protein localises to the secreted. It carries out the reaction Endohydrolysis of (1-&gt;5)-alpha-arabinofuranosidic linkages in (1-&gt;5)-arabinans.. It functions in the pathway glycan metabolism; L-arabinan degradation. Its function is as follows. Endo-1,5-alpha-L-arabinanase involved in degradation of pectin. Its preferred substrate is linear 1,5-alpha-L-arabinan. This chain is Probable arabinan endo-1,5-alpha-L-arabinosidase B (abnB), found in Aspergillus oryzae (strain ATCC 42149 / RIB 40) (Yellow koji mold).